A 447-amino-acid polypeptide reads, in one-letter code: ATP-dependent protease ATPase subunit HslU (447 aa).

ATP is bound by residues Ile-17, 59 to 64 (GVGKTE), Asp-256, Glu-321, and Arg-393.

It belongs to the ClpX chaperone family. HslU subfamily. As to quaternary structure, a double ring-shaped homohexamer of HslV is capped on each side by a ring-shaped HslU homohexamer. The assembly of the HslU/HslV complex is dependent on binding of ATP.

The protein resides in the cytoplasm. In terms of biological role, ATPase subunit of a proteasome-like degradation complex; this subunit has chaperone activity. The binding of ATP and its subsequent hydrolysis by HslU are essential for unfolding of protein substrates subsequently hydrolyzed by HslV. HslU recognizes the N-terminal part of its protein substrates and unfolds these before they are guided to HslV for hydrolysis. In Pseudomonas putida (strain GB-1), this protein is ATP-dependent protease ATPase subunit HslU.